A 373-amino-acid polypeptide reads, in one-letter code: PqqA peptide cyclase (373 aa).

The region spanning 9–224 (LTKPRWLLAE…QSYKEKVKGR (216 aa)) is the Radical SAM core domain. Positions 23, 27, and 30 each coordinate [4Fe-4S] cluster.

It belongs to the radical SAM superfamily. PqqE family. As to quaternary structure, interacts with PqqD. The interaction is necessary for activity of PqqE. [4Fe-4S] cluster serves as cofactor.

The catalysed reaction is [PQQ precursor protein] + S-adenosyl-L-methionine = E-Y cross-linked-[PQQ precursor protein] + 5'-deoxyadenosine + L-methionine + H(+). It functions in the pathway cofactor biosynthesis; pyrroloquinoline quinone biosynthesis. In terms of biological role, catalyzes the cross-linking of a glutamate residue and a tyrosine residue in the PqqA protein as part of the biosynthesis of pyrroloquinoline quinone (PQQ). The sequence is that of PqqA peptide cyclase from Methylococcus capsulatus (strain ATCC 33009 / NCIMB 11132 / Bath).